Reading from the N-terminus, the 191-residue chain is LHFPL tetraspan subfamily member 7 protein (191 aa).

A run of 4 helical transmembrane segments spans residues 6–26, 72–92, 112–132, and 154–174; these read MGSLWVILSLILTLISGFSLM, IAAVLLFGGWLLLSFGAVLVL, YAQISAVVVTVLGLLVFPFNL, and LGWGYMMAIVTVMLSCFLPFI.

This sequence belongs to the TMEM211 family.

The protein localises to the membrane. This Xenopus tropicalis (Western clawed frog) protein is LHFPL tetraspan subfamily member 7 protein (lhfpl7).